The following is a 425-amino-acid chain: Apolipoprotein N-acyltransferase (425 aa).

Transmembrane regions (helical) follow at residues 12–32 (LLAC…AYAI), 34–54 (NPYI…LAFL), 60–80 (SAFA…ALSF), 88–108 (LLPL…YLLL), 120–140 (FLGS…DSFF), and 142–162 (YSVF…CIFL). In terms of domain architecture, CN hydrolase spans 201-425 (VSTKTPQDLK…LGDILFRKRS (225 aa)). Residue glutamate 242 is the Proton acceptor of the active site. Residue lysine 296 is part of the active site. The active-site Nucleophile is cysteine 349.

This sequence belongs to the CN hydrolase family. Apolipoprotein N-acyltransferase subfamily.

Its subcellular location is the cell inner membrane. The catalysed reaction is N-terminal S-1,2-diacyl-sn-glyceryl-L-cysteinyl-[lipoprotein] + a glycerophospholipid = N-acyl-S-1,2-diacyl-sn-glyceryl-L-cysteinyl-[lipoprotein] + a 2-acyl-sn-glycero-3-phospholipid + H(+). The protein operates within protein modification; lipoprotein biosynthesis (N-acyl transfer). Functionally, catalyzes the phospholipid dependent N-acylation of the N-terminal cysteine of apolipoprotein, the last step in lipoprotein maturation. This is Apolipoprotein N-acyltransferase from Helicobacter pylori (strain ATCC 700392 / 26695) (Campylobacter pylori).